We begin with the raw amino-acid sequence, 351 residues long: Mannonate dehydratase (351 aa).

The protein belongs to the mannonate dehydratase family. It depends on Fe(2+) as a cofactor. Requires Mn(2+) as cofactor.

The enzyme catalyses D-mannonate = 2-dehydro-3-deoxy-D-gluconate + H2O. It functions in the pathway carbohydrate metabolism; pentose and glucuronate interconversion. Functionally, catalyzes the dehydration of D-mannonate. The protein is Mannonate dehydratase of Clostridium acetobutylicum (strain ATCC 824 / DSM 792 / JCM 1419 / IAM 19013 / LMG 5710 / NBRC 13948 / NRRL B-527 / VKM B-1787 / 2291 / W).